We begin with the raw amino-acid sequence, 231 residues long: Heptaprenylglyceryl phosphate synthase (231 aa).

Lysine 12 serves as a coordination point for sn-glycerol 1-phosphate. Mg(2+)-binding residues include aspartate 14 and threonine 40. Sn-glycerol 1-phosphate-binding positions include 159–164, glycine 189, and 209–210; these read YLEYSG and GN.

It belongs to the GGGP/HepGP synthase family. Group I subfamily. Homodimer. The cofactor is Mg(2+).

The enzyme catalyses sn-glycerol 1-phosphate + all-trans-heptaprenyl diphosphate = 3-heptaprenyl-sn-glycero-1-phosphate + diphosphate. Its pathway is membrane lipid metabolism; glycerophospholipid metabolism. Functionally, prenyltransferase that catalyzes in vivo the transfer of the heptaprenyl moiety of heptaprenyl pyrophosphate (HepPP; 35 carbon atoms) to the C3 hydroxyl of sn-glycerol-1-phosphate (G1P), producing heptaprenylglyceryl phosphate (HepGP). This reaction is an ether-bond-formation step in the biosynthesis of archaea-type G1P-based membrane lipids found in Bacillales. In Staphylococcus haemolyticus (strain JCSC1435), this protein is Heptaprenylglyceryl phosphate synthase.